Consider the following 1521-residue polypeptide: Suppressor of Ty 6 homolog (1521 aa).

Positions 1 to 238 (MDFIDNQAEE…EEIIEDDGEG (238 aa)) are disordered. The segment covering 26 to 41 (KKMKMAKEKSKRKKKM) has biased composition (basic residues). The Nuclear localization signal motif lies at 26-42 (KKMKMAKEKSKRKKKMV). Acidic residues-rich tracts occupy residues 45 to 56 (SDEDEDDDDDEE) and 67 to 76 (ADDDDEEEDA). Residues 77-89 (KSEKSEKSRHSGE) show a composition bias toward basic and acidic residues. Residues 90–99 (DELDDEDLDL) are compositionally biased toward acidic residues. Residues 126–157 (PIRRPNHEDDDLLSERGSDDGDRRKDRGRGDR) show a composition bias toward basic and acidic residues. Acidic residues-rich tracts occupy residues 166–176 (RSEDDFIEDDG), 191–200 (NLPEGAEDDA), and 209–238 (FNLD…DGEG). The S1 motif domain occupies 1183 to 1252 (LGDSRQGGCP…ERFSLFLSCK (70 aa)). In terms of domain architecture, SH2 spans 1300–1389 (HPNFHNVSYE…IARFVQPMIQ (90 aa)).

It belongs to the SPT6 family. In terms of assembly, interacts with glp-1 and lin-12. In terms of tissue distribution, abundant in embryos, and less abundant in larvae.

The protein resides in the nucleus. Histone H3-H4 chaperone that plays a role in maintenance of chromatin structure during RNA polymerase II transcription elongation. Required for several aspects of morphogenesis of C.elegans, including regulation of division in the germline and gut and specification of ventral-uterine precursor cell fate. The chain is Suppressor of Ty 6 homolog (emb-5) from Caenorhabditis elegans.